We begin with the raw amino-acid sequence, 774 residues long: Mastermind-like domain-containing protein 1 (774 aa).

7 disordered regions span residues 257-279, 310-365, 386-421, 442-473, 525-609, 656-678, and 755-774; these read STGI…SSMA, LAAS…PQSL, ALLS…QPQF, HLMS…QQSF, GMAS…QPDH, PQHQ…VSPS, and LPSC…GNDP. A compositionally biased stretch (pro residues) spans 331-361; sequence LPPPGLSPPYRPVPSPHPPPLPLPPPPPPFS. Polar residues predominate over residues 386 to 397; sequence ALLSSMTSSSNA. Over residues 574 to 609 the composition is skewed to low complexity; that stretch reads QQPTPTQASSATASSTATATLQLQQQQQQQQQQPDH. Polar residues predominate over residues 656–669; sequence PQHQHGNSFTSRQD. Ser676 carries the phosphoserine modification.

Belongs to the mastermind family. In terms of tissue distribution, expressed in fetal brain, fetal ovary and fetal testis. Expressed in adult brain, ovary, skin, testis, uterus. Highly expressed in skeletal muscle.

It is found in the nucleus. Its function is as follows. Transactivates the HES3 promoter independently of NOTCH proteins. HES3 is a non-canonical NOTCH target gene which lacks binding sites for RBPJ. This Homo sapiens (Human) protein is Mastermind-like domain-containing protein 1 (MAMLD1).